We begin with the raw amino-acid sequence, 250 residues long: MLMRQKGIIIKAVDYGESDKIITILNEHGAKVPLMARRAKKVKTGLQAQTQLFVYGLFIYNQWRGMGTLNSVDVISQHYKLQMDLFVSSYASLAAETIERSMDEGDIAPYNYQLLQFVLEKIESGTSAQLMSVVVMLKCMKRFGFTASFNRCAVSGNDTQADLIGYSFKFDGAISRQEASKDVHAVILSNKTLYLLDVLQKLPIDKMNSLNIHQEIIDEMSDIILMLYREYAGMFFKSQKLINQLKRLEQ.

This sequence belongs to the RecO family.

Functionally, involved in DNA repair and RecF pathway recombination. This chain is DNA repair protein RecO, found in Staphylococcus aureus (strain MW2).